A 277-amino-acid polypeptide reads, in one-letter code: NLP effector protein Pc109174 (277 aa).

The signal sequence occupies residues 1 to 19; it reads MNLVPALVLLLALAQTVLG. Residues 119 to 125 carry the Hepta-peptide GHRHDWE motif motif; it reads KSRHLWA. A glycan (N-linked (GlcNAc...) asparagine) is linked at asparagine 199.

This sequence belongs to the Necrosis inducing protein (NPP1) family.

It localises to the secreted. Its function is as follows. Secreted effector that contributes strongly to virulence during infection by P.capsici. Induces cell death in the Solanaceae, including hot pepper. The chain is NLP effector protein Pc109174 from Phytophthora capsici.